The following is a 340-amino-acid chain: Anthranilate phosphoribosyltransferase (340 aa).

5-phospho-alpha-D-ribose 1-diphosphate-binding positions include Gly-80, 83–84, Thr-88, 90–93, 108–116, and Ser-120; these read GD, NIST, and KHGNRAMSS. Gly-80 lines the anthranilate pocket. Ser-92 lines the Mg(2+) pocket. An anthranilate-binding site is contributed by Asn-111. Anthranilate is bound at residue Arg-166. Mg(2+)-binding residues include Asp-225 and Glu-226.

Belongs to the anthranilate phosphoribosyltransferase family. As to quaternary structure, homodimer. Mg(2+) serves as cofactor.

The catalysed reaction is N-(5-phospho-beta-D-ribosyl)anthranilate + diphosphate = 5-phospho-alpha-D-ribose 1-diphosphate + anthranilate. The protein operates within amino-acid biosynthesis; L-tryptophan biosynthesis; L-tryptophan from chorismate: step 2/5. In terms of biological role, catalyzes the transfer of the phosphoribosyl group of 5-phosphorylribose-1-pyrophosphate (PRPP) to anthranilate to yield N-(5'-phosphoribosyl)-anthranilate (PRA). The protein is Anthranilate phosphoribosyltransferase of Roseiflexus castenholzii (strain DSM 13941 / HLO8).